Reading from the N-terminus, the 883-residue chain is Alanine--tRNA ligase (883 aa).

Positions 560, 564, 665, and 669 each coordinate Zn(2+).

This sequence belongs to the class-II aminoacyl-tRNA synthetase family. Requires Zn(2+) as cofactor.

The protein localises to the cytoplasm. It catalyses the reaction tRNA(Ala) + L-alanine + ATP = L-alanyl-tRNA(Ala) + AMP + diphosphate. Catalyzes the attachment of alanine to tRNA(Ala) in a two-step reaction: alanine is first activated by ATP to form Ala-AMP and then transferred to the acceptor end of tRNA(Ala). Also edits incorrectly charged Ser-tRNA(Ala) and Gly-tRNA(Ala) via its editing domain. This chain is Alanine--tRNA ligase, found in Mesomycoplasma hyopneumoniae (strain 7448) (Mycoplasma hyopneumoniae).